The sequence spans 250 residues: 3-deoxy-manno-octulosonate cytidylyltransferase (250 aa).

It belongs to the KdsB family.

It is found in the cytoplasm. It catalyses the reaction 3-deoxy-alpha-D-manno-oct-2-ulosonate + CTP = CMP-3-deoxy-beta-D-manno-octulosonate + diphosphate. Its pathway is nucleotide-sugar biosynthesis; CMP-3-deoxy-D-manno-octulosonate biosynthesis; CMP-3-deoxy-D-manno-octulosonate from 3-deoxy-D-manno-octulosonate and CTP: step 1/1. The protein operates within bacterial outer membrane biogenesis; lipopolysaccharide biosynthesis. Activates KDO (a required 8-carbon sugar) for incorporation into bacterial lipopolysaccharide in Gram-negative bacteria. This Legionella pneumophila (strain Paris) protein is 3-deoxy-manno-octulosonate cytidylyltransferase.